A 181-amino-acid chain; its full sequence is MGNIFGNLLKSLIGKKEMRILMVGLDAAGKTTILYKLKLGEIVTTIPTIGFNVETVEYKNISFTVWDVGGQDKIRPLWRHYFQNTQGLIFVVDSNDRERVNEAREELMRMLAEDELRDAVLLVFANKQDLPNAMNAAEITDKLGLHSLRHRNWYIQATCATSGDGLYEGLDWLANQLKNKK.

Glycine 2 is lipidated: N-myristoyl glycine. GTP-binding positions include 24–31 (GLDAAGKT), 67–71 (DVGGQ), and 126–129 (NKQD).

Belongs to the small GTPase superfamily. Arf family. Interacts with PRKCABP. Interacts with PI4KB and NCS1/FREQ at the Golgi complex.

The protein resides in the golgi apparatus. Its subcellular location is the cytoplasm. It localises to the perinuclear region. In terms of biological role, GTP-binding protein that functions as an allosteric activator of the cholera toxin catalytic subunit, an ADP-ribosyltransferase. Involved in protein trafficking; may modulate vesicle budding and uncoating within the Golgi apparatus. This chain is ADP-ribosylation factor 3 (ARF3), found in Bos taurus (Bovine).